The primary structure comprises 196 residues: dTTP/UTP pyrophosphatase (196 aa).

Residue aspartate 77 is the Proton acceptor of the active site.

It belongs to the Maf family. YhdE subfamily. The cofactor is a divalent metal cation.

The protein localises to the cytoplasm. The catalysed reaction is dTTP + H2O = dTMP + diphosphate + H(+). It catalyses the reaction UTP + H2O = UMP + diphosphate + H(+). Its function is as follows. Nucleoside triphosphate pyrophosphatase that hydrolyzes dTTP and UTP. May have a dual role in cell division arrest and in preventing the incorporation of modified nucleotides into cellular nucleic acids. The polypeptide is dTTP/UTP pyrophosphatase (Christiangramia forsetii (strain DSM 17595 / CGMCC 1.15422 / KT0803) (Gramella forsetii)).